Reading from the N-terminus, the 326-residue chain is Methionine import ATP-binding protein MetN (326 aa).

The ABC transporter domain maps to 1-226 (MVFYTIGPQT…PQQPITRQFV (226 aa)). 23–30 (GYSGAGKS) contacts ATP.

Belongs to the ABC transporter superfamily. Methionine importer (TC 3.A.1.24) family. In terms of assembly, the complex is composed of two ATP-binding proteins (MetN), two transmembrane proteins (MetI) and a solute-binding protein (MetQ).

The protein localises to the cell inner membrane. It carries out the reaction L-methionine(out) + ATP + H2O = L-methionine(in) + ADP + phosphate + H(+). It catalyses the reaction D-methionine(out) + ATP + H2O = D-methionine(in) + ADP + phosphate + H(+). Part of the ABC transporter complex MetNIQ involved in methionine import. Responsible for energy coupling to the transport system. The sequence is that of Methionine import ATP-binding protein MetN from Erwinia pyrifoliae (strain DSM 12162 / Ep1/96).